A 275-amino-acid chain; its full sequence is S-formylglutathione hydrolase (275 aa).

Catalysis depends on charge relay system residues S145, D221, and H254.

This sequence belongs to the esterase D family.

It catalyses the reaction S-formylglutathione + H2O = formate + glutathione + H(+). Its function is as follows. Serine hydrolase involved in the detoxification of formaldehyde. Hydrolyzes S-formylglutathione to glutathione and formate. In Haemophilus influenzae (strain ATCC 51907 / DSM 11121 / KW20 / Rd), this protein is S-formylglutathione hydrolase.